Reading from the N-terminus, the 399-residue chain is L-methionine gamma-lyase (399 aa).

Pyridoxal 5'-phosphate contacts are provided by residues 59-61 (YTR) and 89-90 (GI). Y114 contributes to the substrate binding site. Pyridoxal 5'-phosphate is bound at residue 209-211 (SAT). Position 212 is an N6-(pyridoxal phosphate)lysine (K212). R376 provides a ligand contact to substrate.

This sequence belongs to the trans-sulfuration enzymes family. L-methionine gamma-lyase subfamily. As to quaternary structure, homotetramer; dimer of active dimers. The cofactor is pyridoxal 5'-phosphate.

It carries out the reaction L-methionine + H2O = methanethiol + 2-oxobutanoate + NH4(+). The catalysed reaction is L-homocysteine + H2O = 2-oxobutanoate + hydrogen sulfide + NH4(+) + H(+). Catalyzes the alpha,gamma-elimination of L-methionine to produce methanethiol, 2-oxobutanoate and ammonia; methanethiol (methyl mercaptan) is considered to be one of the main causes of the oral malodor in periodontal disease and may also play a role in the pathogenicity of P.gingivalis in that disease. Is also able to catalyze the alpha,gamma-elimination of L-homocysteine. The protein is L-methionine gamma-lyase of Porphyromonas gingivalis (strain ATCC BAA-308 / W83).